Here is a 266-residue protein sequence, read N- to C-terminus: 4-hydroxy-tetrahydrodipicolinate reductase (266 aa).

Residue 10-15 (GPRGRM) coordinates NAD(+). An NADP(+)-binding site is contributed by Lys38. NAD(+) contacts are provided by residues 99–101 (GTT) and 125–128 (APNF). His155 functions as the Proton donor/acceptor in the catalytic mechanism. His156 is a (S)-2,3,4,5-tetrahydrodipicolinate binding site. The active-site Proton donor is the Lys159. 165 to 166 (GT) is a (S)-2,3,4,5-tetrahydrodipicolinate binding site.

This sequence belongs to the DapB family.

The protein resides in the cytoplasm. The enzyme catalyses (S)-2,3,4,5-tetrahydrodipicolinate + NAD(+) + H2O = (2S,4S)-4-hydroxy-2,3,4,5-tetrahydrodipicolinate + NADH + H(+). It carries out the reaction (S)-2,3,4,5-tetrahydrodipicolinate + NADP(+) + H2O = (2S,4S)-4-hydroxy-2,3,4,5-tetrahydrodipicolinate + NADPH + H(+). Its pathway is amino-acid biosynthesis; L-lysine biosynthesis via DAP pathway; (S)-tetrahydrodipicolinate from L-aspartate: step 4/4. Its function is as follows. Catalyzes the conversion of 4-hydroxy-tetrahydrodipicolinate (HTPA) to tetrahydrodipicolinate. The polypeptide is 4-hydroxy-tetrahydrodipicolinate reductase (Bacillus cereus (strain ATCC 14579 / DSM 31 / CCUG 7414 / JCM 2152 / NBRC 15305 / NCIMB 9373 / NCTC 2599 / NRRL B-3711)).